A 496-amino-acid chain; its full sequence is Ankyrin repeat domain-containing protein 34A (496 aa).

ANK repeat units lie at residues 4 to 33, 37 to 72, 76 to 106, and 110 to 139; these read TEGH…YVNE, QGET…DPNI, LGRT…DPSV, and AGAS…AKGT. N5-methylglutamine is present on glutamine 15. Polar residues-rich tracts occupy residues 147–162 and 180–191; these read DTSP…YLNS and FCTSPSEIQLQT. The disordered stretch occupies residues 147 to 473; the sequence is DTSPSGTKKT…TKRKLVRRHS (327 aa). Positions 204-214 are enriched in basic and acidic residues; sequence AQEEEEKRDVF. Pro residues predominate over residues 218-233; that stretch reads LPKPPDDPSPSEPLPK. Over residues 234–243 the composition is skewed to basic residues; sequence PPRHPPKPLK. Threonine 316 bears the Phosphothreonine mark. Basic residues predominate over residues 463–473; the sequence is RTKRKLVRRHS.

This sequence belongs to the ANKRD34 family. Post-translationally, methylated at Gln-15 by N6AMT1.

The polypeptide is Ankyrin repeat domain-containing protein 34A (ANKRD34A) (Homo sapiens (Human)).